A 335-amino-acid chain; its full sequence is Acetyl-coenzyme A carboxylase carboxyl transferase subunit alpha (335 aa).

Residues 40-294 (QLETLAARRR…KEAIEKHLNA (255 aa)) enclose the CoA carboxyltransferase C-terminal domain.

It belongs to the AccA family. In terms of assembly, acetyl-CoA carboxylase is a heterohexamer composed of biotin carboxyl carrier protein (AccB), biotin carboxylase (AccC) and two subunits each of ACCase subunit alpha (AccA) and ACCase subunit beta (AccD).

Its subcellular location is the cytoplasm. The catalysed reaction is N(6)-carboxybiotinyl-L-lysyl-[protein] + acetyl-CoA = N(6)-biotinyl-L-lysyl-[protein] + malonyl-CoA. It participates in lipid metabolism; malonyl-CoA biosynthesis; malonyl-CoA from acetyl-CoA: step 1/1. Its function is as follows. Component of the acetyl coenzyme A carboxylase (ACC) complex. First, biotin carboxylase catalyzes the carboxylation of biotin on its carrier protein (BCCP) and then the CO(2) group is transferred by the carboxyltransferase to acetyl-CoA to form malonyl-CoA. This Prochlorococcus marinus (strain MIT 9301) protein is Acetyl-coenzyme A carboxylase carboxyl transferase subunit alpha.